Here is a 418-residue protein sequence, read N- to C-terminus: tRNA(Met) cytidine acetate ligase (418 aa).

Glycine 95, asparagine 161, and arginine 186 together coordinate ATP.

It belongs to the TmcAL family.

The protein resides in the cytoplasm. It catalyses the reaction cytidine(34) in elongator tRNA(Met) + acetate + ATP = N(4)-acetylcytidine(34) in elongator tRNA(Met) + AMP + diphosphate. Catalyzes the formation of N(4)-acetylcytidine (ac(4)C) at the wobble position of elongator tRNA(Met), using acetate and ATP as substrates. First activates an acetate ion to form acetyladenylate (Ac-AMP) and then transfers the acetyl group to tRNA to form ac(4)C34. The sequence is that of tRNA(Met) cytidine acetate ligase from Thermotoga petrophila (strain ATCC BAA-488 / DSM 13995 / JCM 10881 / RKU-1).